The chain runs to 316 residues: Glutathione synthetase (316 aa).

One can recognise an ATP-grasp domain in the interval 124 to 311 (NEKLAALLFP…IAGLLFDAIE (188 aa)). 151 to 208 (FVLEHGQAVLKPLDGMGGRSIFRSGSGDPNLNVILETLTDGNRKLTLAQRFIPDITAG) contributes to the ATP binding site. E282 and N284 together coordinate Mg(2+).

It belongs to the prokaryotic GSH synthase family. The cofactor is Mg(2+). Mn(2+) serves as cofactor.

The enzyme catalyses gamma-L-glutamyl-L-cysteine + glycine + ATP = glutathione + ADP + phosphate + H(+). The protein operates within sulfur metabolism; glutathione biosynthesis; glutathione from L-cysteine and L-glutamate: step 2/2. This Xanthomonas axonopodis pv. citri (strain 306) protein is Glutathione synthetase.